Here is a 207-residue protein sequence, read N- to C-terminus: Protein-L-isoaspartate O-methyltransferase (207 aa).

Serine 56 is a catalytic residue.

It belongs to the methyltransferase superfamily. L-isoaspartyl/D-aspartyl protein methyltransferase family.

It is found in the cytoplasm. It carries out the reaction [protein]-L-isoaspartate + S-adenosyl-L-methionine = [protein]-L-isoaspartate alpha-methyl ester + S-adenosyl-L-homocysteine. Its function is as follows. Catalyzes the methyl esterification of L-isoaspartyl residues in peptides and proteins that result from spontaneous decomposition of normal L-aspartyl and L-asparaginyl residues. It plays a role in the repair and/or degradation of damaged proteins. The polypeptide is Protein-L-isoaspartate O-methyltransferase (Pyrobaculum neutrophilum (strain DSM 2338 / JCM 9278 / NBRC 100436 / V24Sta) (Thermoproteus neutrophilus)).